Here is a 458-residue protein sequence, read N- to C-terminus: A-type ATP synthase subunit B (458 aa).

This sequence belongs to the ATPase alpha/beta chains family. Has multiple subunits with at least A(3), B(3), C, D, E, F, H, I and proteolipid K(x).

The protein resides in the cell membrane. In terms of biological role, component of the A-type ATP synthase that produces ATP from ADP in the presence of a proton gradient across the membrane. The B chain is a regulatory subunit. This chain is A-type ATP synthase subunit B, found in Methanocorpusculum labreanum (strain ATCC 43576 / DSM 4855 / Z).